The chain runs to 120 residues: Large ribosomal subunit protein uL18 (120 aa).

The disordered stretch occupies residues 1 to 22 (MKVDRKTATHRRHQRIRRKIAG). Basic residues predominate over residues 8–20 (ATHRRHQRIRRKI).

This sequence belongs to the universal ribosomal protein uL18 family. As to quaternary structure, part of the 50S ribosomal subunit; part of the 5S rRNA/L5/L18/L25 subcomplex. Contacts the 5S and 23S rRNAs.

In terms of biological role, this is one of the proteins that bind and probably mediate the attachment of the 5S RNA into the large ribosomal subunit, where it forms part of the central protuberance. This Gloeobacter violaceus (strain ATCC 29082 / PCC 7421) protein is Large ribosomal subunit protein uL18.